A 164-amino-acid polypeptide reads, in one-letter code: MMKTSAIHSPFEAPNTISLVAGTGDAKNPLNAFDMSLLESGIGNLNLIRISSIMPPKADIIPLPKIPQGSLVPTAYGYQISELKGETVAAGISVAIPKDKELCGLIMEYECIGGKKECEDTVRNMAKEGFEMRGWEIDEIISIASEHTVENIGCAFAAAALWYK.

Ser-52 carries the pyruvic acid (Ser) modification.

This sequence belongs to the PdaD family. The cofactor is pyruvate.

It carries out the reaction L-arginine + H(+) = agmatine + CO2. The protein is Pyruvoyl-dependent arginine decarboxylase of Methanococcus maripaludis (strain C6 / ATCC BAA-1332).